The sequence spans 247 residues: UPF0246 protein LSL_1719 (247 aa).

The protein belongs to the UPF0246 family.

The protein is UPF0246 protein LSL_1719 of Ligilactobacillus salivarius (strain UCC118) (Lactobacillus salivarius).